We begin with the raw amino-acid sequence, 194 residues long: Peptidyl-tRNA hydrolase (194 aa).

Tyr-17 is a binding site for tRNA. His-22 functions as the Proton acceptor in the catalytic mechanism. TRNA-binding residues include Tyr-68, Asn-70, and Asn-116.

It belongs to the PTH family. In terms of assembly, monomer.

It localises to the cytoplasm. The enzyme catalyses an N-acyl-L-alpha-aminoacyl-tRNA + H2O = an N-acyl-L-amino acid + a tRNA + H(+). In terms of biological role, hydrolyzes ribosome-free peptidyl-tRNAs (with 1 or more amino acids incorporated), which drop off the ribosome during protein synthesis, or as a result of ribosome stalling. Its function is as follows. Catalyzes the release of premature peptidyl moieties from peptidyl-tRNA molecules trapped in stalled 50S ribosomal subunits, and thus maintains levels of free tRNAs and 50S ribosomes. This is Peptidyl-tRNA hydrolase from Pseudomonas fluorescens (strain ATCC BAA-477 / NRRL B-23932 / Pf-5).